The sequence spans 357 residues: Meiotic driver wtf9 (357 aa).

Residues 1–39 (MKNKYYPLRSSMDEMSAKNDNEIDLEKGPLPEYNSEDGS) are disordered. Basic and acidic residues predominate over residues 11–29 (SMDEMSAKNDNEIDLEKGP). A run of 7 helical transmembrane segments spans residues 89–109 (LLISVLAVIVVFFTAWVCVNP), 119–139 (AFFVTIGITCPILLITIFCFF), 149–169 (CIKVTVIFLAQCVKVTVISLA), 198–218 (VVIIWLLWVVICYTLFLRSKF), 232–252 (CSISAALLLFLLYVRLPFWTL), 256–276 (FSGLFQVLGVQSCVVIVTKGL), and 286–306 (ATGYEIEASSLFVIGNFLFFY).

The protein belongs to the WTF family. Homomer. Forms protein aggregates. The two isoforms can interact with each other and with themselves. High sequence similarity is required for their interaction.

The protein resides in the spore membrane. It localises to the vacuole membrane. The protein localises to the ascus epiplasm. It is found in the cytoplasm. Its subcellular location is the endoplasmic reticulum membrane. Promotes unequal transmission of alleles from the parental zygote to progeny spores by acting as poison/antidote system where the poison and antidote proteins are produced from the same locus; the poison component is trans-acting and targets all spores within an ascus whereas the antidote component is spore-specific, leading to poisoning of all progeny that do not inherit the allele. Its function is as follows. Localizes isoform 2 to the vacuole thereby facilitating its degradation. In terms of biological role, forms toxic aggregates that disrupt spore maturation. The chain is Meiotic driver wtf9 from Schizosaccharomyces kambucha (Fission yeast).